Reading from the N-terminus, the 296-residue chain is Protoheme IX farnesyltransferase (296 aa).

The next 9 helical transmembrane spans lie at Pro-11–Gly-31, Tyr-35–Phe-55, Val-84–Ala-104, Leu-107–Met-127, Val-132–Ala-152, Leu-162–Phe-182, Ile-208–Ala-228, Gly-229–Ser-249, and Leu-264–Met-284.

Belongs to the UbiA prenyltransferase family. Protoheme IX farnesyltransferase subfamily.

The protein resides in the cell inner membrane. It catalyses the reaction heme b + (2E,6E)-farnesyl diphosphate + H2O = Fe(II)-heme o + diphosphate. The protein operates within porphyrin-containing compound metabolism; heme O biosynthesis; heme O from protoheme: step 1/1. In terms of biological role, converts heme B (protoheme IX) to heme O by substitution of the vinyl group on carbon 2 of heme B porphyrin ring with a hydroxyethyl farnesyl side group. This chain is Protoheme IX farnesyltransferase, found in Pectobacterium atrosepticum (strain SCRI 1043 / ATCC BAA-672) (Erwinia carotovora subsp. atroseptica).